Reading from the N-terminus, the 432-residue chain is Tol-Pal system protein TolB (432 aa).

Positions 1-21 (MSTLIRIALFALALMAGAAQA) are cleaved as a signal peptide.

Belongs to the TolB family. In terms of assembly, the Tol-Pal system is composed of five core proteins: the inner membrane proteins TolA, TolQ and TolR, the periplasmic protein TolB and the outer membrane protein Pal. They form a network linking the inner and outer membranes and the peptidoglycan layer.

It is found in the periplasm. In terms of biological role, part of the Tol-Pal system, which plays a role in outer membrane invagination during cell division and is important for maintaining outer membrane integrity. The chain is Tol-Pal system protein TolB from Pseudomonas aeruginosa (strain ATCC 15692 / DSM 22644 / CIP 104116 / JCM 14847 / LMG 12228 / 1C / PRS 101 / PAO1).